A 680-amino-acid polypeptide reads, in one-letter code: Chondroitin proteoglycan 4 (680 aa).

A signal peptide spans 1–18 (MLRVNLLILLCFVPFSLN). 13 N-linked (GlcNAc...) asparagine glycosylation sites follow: Asn-42, Asn-59, Asn-72, Asn-167, Asn-205, Asn-458, Asn-472, Asn-486, Asn-498, Asn-526, Asn-527, Asn-556, and Asn-604. The tract at residues 460 to 680 (TKKAETTKKS…PLTTTLHELY (221 aa)) is disordered. A compositionally biased stretch (low complexity) spans 484–500 (AANTTAETTKTTSANIT). The span at 520 to 530 (SLDTSGNNSTV) shows a compositional bias: polar residues. 2 stretches are compositionally biased toward low complexity: residues 633–647 (GEAS…SGEV) and 654–669 (SGYS…SSGE). O-linked (Xyl...) (chondroitin sulfate) serine glycans are attached at residues Ser-640 and Ser-644. Asn-664 is a glycosylation site (N-linked (GlcNAc...) asparagine).

The sequence is that of Chondroitin proteoglycan 4 (cpg-4) from Caenorhabditis briggsae.